The sequence spans 475 residues: Adenosylhomocysteinase (475 aa).

T66, D141, and E201 together coordinate substrate. Residue 202–204 coordinates NAD(+); the sequence is TTT. Substrate-binding residues include K231 and D235. Residues N236, 265–270, E288, N323, 344–346, and N389 each bind NAD(+); these read GYGEVG and IGH.

Belongs to the adenosylhomocysteinase family. Requires NAD(+) as cofactor.

It is found in the cytoplasm. The enzyme catalyses S-adenosyl-L-homocysteine + H2O = L-homocysteine + adenosine. Its pathway is amino-acid biosynthesis; L-homocysteine biosynthesis; L-homocysteine from S-adenosyl-L-homocysteine: step 1/1. May play a key role in the regulation of the intracellular concentration of adenosylhomocysteine. This chain is Adenosylhomocysteinase, found in Geobacter sulfurreducens (strain ATCC 51573 / DSM 12127 / PCA).